A 491-amino-acid chain; its full sequence is Glutamyl-tRNA(Gln) amidotransferase subunit A (491 aa).

Catalysis depends on charge relay system residues Lys78 and Ser158. Ser182 serves as the catalytic Acyl-ester intermediate.

Belongs to the amidase family. GatA subfamily. Heterotrimer of A, B and C subunits.

The catalysed reaction is L-glutamyl-tRNA(Gln) + L-glutamine + ATP + H2O = L-glutaminyl-tRNA(Gln) + L-glutamate + ADP + phosphate + H(+). In terms of biological role, allows the formation of correctly charged Gln-tRNA(Gln) through the transamidation of misacylated Glu-tRNA(Gln) in organisms which lack glutaminyl-tRNA synthetase. The reaction takes place in the presence of glutamine and ATP through an activated gamma-phospho-Glu-tRNA(Gln). The sequence is that of Glutamyl-tRNA(Gln) amidotransferase subunit A from Bradyrhizobium sp. (strain ORS 278).